A 915-amino-acid polypeptide reads, in one-letter code: Probable dipeptidyl-aminopeptidase B (915 aa).

Disordered regions lie at residues 1-20 and 52-74; these read MAGEKGGSRDEEREPLTRGS and QDSRLGEKDQRDDDHDQYRNEEE. Residues 1–95 lie on the Cytoplasmic side of the membrane; it reads MAGEKGGSRD…GGKTVQKTTK (95 aa). The segment covering 55-72 has biased composition (basic and acidic residues); it reads RLGEKDQRDDDHDQYRNE. The chain crosses the membrane as a helical; Signal-anchor for type II membrane protein span at residues 96–116; sequence IVLWALLFLCVGGWSLAFVIF. Over 117–915 the chain is Vacuolar; sequence LFRGHDTPQT…RAETWGGLPV (799 aa). 4 N-linked (GlcNAc...) asparagine glycosylation sites follow: N133, N179, N349, and N572. The Charge relay system role is filled by S754. An N-linked (GlcNAc...) asparagine glycan is attached at N813. Residues D831 and H864 each act as charge relay system in the active site. The N-linked (GlcNAc...) asparagine glycan is linked to N900.

It belongs to the peptidase S9B family.

Its subcellular location is the vacuole membrane. The catalysed reaction is Release of an N-terminal dipeptide, Xaa-Yaa-|-Zaa-, from a polypeptide, preferentially when Yaa is Pro, provided Zaa is neither Pro nor hydroxyproline.. Functionally, type IV dipeptidyl-peptidase which removes N-terminal dipeptides sequentially from polypeptides having unsubstituted N-termini provided that the penultimate residue is proline. The sequence is that of Probable dipeptidyl-aminopeptidase B (DAPB) from Blastomyces gilchristii (strain SLH14081) (Blastomyces dermatitidis).